A 182-amino-acid chain; its full sequence is Ribosome maturation factor RimM (182 aa).

Residues 103-182 (EDDYYWKDLM…RVEVDWDPGF (80 aa)) enclose the PRC barrel domain.

Belongs to the RimM family. In terms of assembly, binds ribosomal protein uS19.

It is found in the cytoplasm. Its function is as follows. An accessory protein needed during the final step in the assembly of 30S ribosomal subunit, possibly for assembly of the head region. Essential for efficient processing of 16S rRNA. May be needed both before and after RbfA during the maturation of 16S rRNA. It has affinity for free ribosomal 30S subunits but not for 70S ribosomes. This chain is Ribosome maturation factor RimM, found in Yersinia pestis bv. Antiqua (strain Antiqua).